We begin with the raw amino-acid sequence, 113 residues long: UPF0342 protein SEQ_0993 (113 aa).

Belongs to the UPF0342 family.

The sequence is that of UPF0342 protein SEQ_0993 from Streptococcus equi subsp. equi (strain 4047).